We begin with the raw amino-acid sequence, 380 residues long: Calreticulin-3 (380 aa).

The signal sequence occupies residues 1–19; the sequence is MVSARALLWAICVLRVALA. Positions 20–197 are N-domain; it reads TVYFQEEFLD…GQSIESGSIE (178 aa). Asparagine 42 carries N-linked (GlcNAc...) asparagine glycosylation. An alpha-D-glucoside-binding residues include tyrosine 109, lysine 111, tyrosine 128, and aspartate 135. Cysteine 137 and cysteine 163 form a disulfide bridge. 7 repeat units span residues 191 to 202, 209 to 220, 222 to 231, 235 to 246, 250 to 256, 260 to 268, and 270 to 280. A 4 X approximate repeats region spans residues 191–246; sequence IESGSIEYDWNLTSLRKTEKTSLDSRDWDQVEGSKVQDWEKHFLDAGASKPSDWNS. Residues 198–291 are P-domain; sequence YDWNLTSLRK…YLTQYDLSEF (94 aa). Residue asparagine 201 is glycosylated (N-linked (GlcNAc...) asparagine). Residues 250 to 280 form a 3 X approximate repeats region; that stretch reads GDWLQKPPYEDGLKAEGIDKDVWLHQKMRPA. Residues 292–380 form a C-domain region; the sequence is ENIGAIGLEL…FSRFHRQGEL (89 aa). Glutamate 300 lines the an alpha-D-glucoside pocket. Positions 377–380 match the Prevents secretion from ER motif; sequence QGEL.

Belongs to the calreticulin family. As to quaternary structure, component of an EIF2 complex at least composed of CELF1/CUGBP1, CALR, CALR3, EIF2S1, EIF2S2, HSP90B1 and HSPA5. Testis specific, absent in mature sperm.

It localises to the endoplasmic reticulum lumen. In terms of biological role, CALR3 capacity for calcium-binding may be absent or much lower than that of CALR. During spermatogenesis, may act as a lectin-independent chaperone for specific client proteins such as ADAM3. Required for sperm fertility. The chain is Calreticulin-3 (Calr3) from Mus musculus (Mouse).